Here is a 213-residue protein sequence, read N- to C-terminus: N-(5'-phosphoribosyl)anthranilate isomerase (213 aa).

Belongs to the TrpF family.

The catalysed reaction is N-(5-phospho-beta-D-ribosyl)anthranilate = 1-(2-carboxyphenylamino)-1-deoxy-D-ribulose 5-phosphate. It functions in the pathway amino-acid biosynthesis; L-tryptophan biosynthesis; L-tryptophan from chorismate: step 3/5. This chain is N-(5'-phosphoribosyl)anthranilate isomerase, found in Rhodopseudomonas palustris (strain ATCC BAA-98 / CGA009).